Consider the following 357-residue polypeptide: Protein FAM118A (357 aa).

M1 bears the N-acetylmethionine mark. Residues 30–50 traverse the membrane as a helical segment; that stretch reads LLLVIGTGVSAAVAPGIPALC. Residue S311 is modified to Phosphoserine.

The protein belongs to the FAM118 family.

The protein resides in the membrane. The protein is Protein FAM118A (FAM118A) of Homo sapiens (Human).